Here is a 642-residue protein sequence, read N- to C-terminus: Sterol O-acyltransferase 2 (642 aa).

Positions 174-194 (KSSPDAVDSVGKNDGAAPTTV) are disordered. S175 and S176 each carry phosphoserine. The next 5 membrane-spanning stretches (helical) occupy residues 215–235 (FSGL…KALI), 292–312 (TGWI…MYLT), 404–424 (ISAK…QIEY), 442–462 (IFGT…PVAM), and 485–505 (LLVD…YLIW). Residues 523 to 529 (FYGDWWN) carry the FYXDWWN motif motif. The next 2 helical transmembrane spans lie at 567-587 (ATLM…YVIF) and 622-642 (VIFW…YLTF). Residue H579 is part of the active site.

The protein belongs to the membrane-bound acyltransferase family. Sterol o-acyltransferase subfamily.

Its subcellular location is the endoplasmic reticulum membrane. It catalyses the reaction ergosterol + an acyl-CoA = ergosteryl ester + CoA. The catalysed reaction is zymosterol + an acyl-CoA = zymosterol ester + CoA. Sterol O-acyltransferase that catalyzes the formation of stery esters. This chain is Sterol O-acyltransferase 2, found in Saccharomyces cerevisiae (strain ATCC 204508 / S288c) (Baker's yeast).